The sequence spans 97 residues: Aspartyl/glutamyl-tRNA(Asn/Gln) amidotransferase subunit C (97 aa).

It belongs to the GatC family. In terms of assembly, heterotrimer of A, B and C subunits.

The catalysed reaction is L-glutamyl-tRNA(Gln) + L-glutamine + ATP + H2O = L-glutaminyl-tRNA(Gln) + L-glutamate + ADP + phosphate + H(+). The enzyme catalyses L-aspartyl-tRNA(Asn) + L-glutamine + ATP + H2O = L-asparaginyl-tRNA(Asn) + L-glutamate + ADP + phosphate + 2 H(+). Its function is as follows. Allows the formation of correctly charged Asn-tRNA(Asn) or Gln-tRNA(Gln) through the transamidation of misacylated Asp-tRNA(Asn) or Glu-tRNA(Gln) in organisms which lack either or both of asparaginyl-tRNA or glutaminyl-tRNA synthetases. The reaction takes place in the presence of glutamine and ATP through an activated phospho-Asp-tRNA(Asn) or phospho-Glu-tRNA(Gln). This Synechococcus sp. (strain JA-3-3Ab) (Cyanobacteria bacterium Yellowstone A-Prime) protein is Aspartyl/glutamyl-tRNA(Asn/Gln) amidotransferase subunit C.